A 633-amino-acid polypeptide reads, in one-letter code: CDK5 and ABL1 enzyme substrate 1 (633 aa).

Positions 1-29 (MAAAAAAATTAACSSGSAGTDAAGASGLQ) are enriched in low complexity. Positions 1 to 99 (MAAAAAAATT…EGGAAKPGAG (99 aa)) are disordered. The interaction with TDRD7 stretch occupies residues 1–109 (MAAAAAAATT…GACGARTRFS (109 aa)). The span at 51-61 (PPRKPRMDPRR) shows a compositional bias: basic and acidic residues. Phosphoserine is present on residues serine 168 and serine 287. The interaction with CDK3 stretch occupies residues 179 to 492 (QWQPPRPAPL…TTVIDYVKPS (314 aa)). The residue at position 313 (serine 313) is a Phosphoserine; by CDK2 and CDK3. A Phosphothreonine modification is found at threonine 415.

Belongs to the cyclin family. As to quaternary structure, found in a complex with p53/TP53. Found in a number of complexes with CDK2, CDK3, CDK5, ABL1, TDRD7, CDK17, CCNA1, CCNE1 and TP73. Interacts with CDK2, CDK3, CDK5, ABL1 and TDRD7. Phosphorylated on Ser-313 by CCNE1/CDK3. Phosphorylated on serine/threonine residues by CDK5 and on tyrosine residues by ABL1. Also phosphorylated in vitro by CCNA1/CDK2, CCNE1/CDK2, CCNA1/CDK3 and CCNE1/CDK3. Expressed in breast, pancreas, colon, head and neck (at protein level). Strongly decreased in more than half of cases of atypical endometrial hyperplasia and in more than 90% of endometrial cancers.

It is found in the nucleus. The protein localises to the cytoplasm. Functionally, cyclin-dependent kinase binding protein. Enhances cyclin-dependent kinase tyrosine phosphorylation by nonreceptor tyrosine kinases, such as that of CDK5 by activated ABL1, which leads to increased CDK5 activity and is critical for neuronal development, and that of CDK2 by WEE1, which leads to decreased CDK2 activity and growth inhibition. Positively affects neuronal outgrowth. Plays a role as a regulator for p53/p73-induced cell death. The protein is CDK5 and ABL1 enzyme substrate 1 (CABLES1) of Homo sapiens (Human).